The following is a 392-amino-acid chain: MKLHEYQAKGLFRDYGVSVPDGIVAETVDAAVDAARRLEEENDATLFIVKAQIHAGGRGKGGGVKLAHSVEEVREHADNILGMDLVTHQTGPEGQTVRKILVTEGVDIDQEYYLGVTLDRETSMNAIMVSTEGGVDIETVAEESPEKIQRVWVDPSIGLRPFQTRQLAFAMGLEGDAFKQAVASIQGLYEAFEENDCTLAEINPLVQTPGGDIEAVDAKVNLDDNALFRHPDLEEMRDLHEEDPTEVKAGEHGLSYITLDGNVGCMVNGAGLAMATMDIIKLAGGEPANFLDVGGAASAETVEAGFRIILEDPNVEALLLNIFGGIVRCDRVAQGVIEAAKNIDIDVPLIVRLQGTNAEEGKRLLDESDLSLRSAVLLKEAADEVTAALGED.

One can recognise an ATP-grasp domain in the interval 9–248; that stretch reads KGLFRDYGVS…LHEEDPTEVK (240 aa). Residues Lys-50, 57–59, Val-106, and Glu-111 each bind ATP; that span reads GRG. Positions 203 and 217 each coordinate Mg(2+). Substrate is bound by residues Asn-268 and 325-327; that span reads GIV.

Belongs to the succinate/malate CoA ligase beta subunit family. In terms of assembly, heterotetramer of two alpha and two beta subunits. Mg(2+) is required as a cofactor.

It carries out the reaction succinate + ATP + CoA = succinyl-CoA + ADP + phosphate. It catalyses the reaction GTP + succinate + CoA = succinyl-CoA + GDP + phosphate. It participates in carbohydrate metabolism; tricarboxylic acid cycle; succinate from succinyl-CoA (ligase route): step 1/1. In terms of biological role, succinyl-CoA synthetase functions in the citric acid cycle (TCA), coupling the hydrolysis of succinyl-CoA to the synthesis of either ATP or GTP and thus represents the only step of substrate-level phosphorylation in the TCA. The beta subunit provides nucleotide specificity of the enzyme and binds the substrate succinate, while the binding sites for coenzyme A and phosphate are found in the alpha subunit. This is Succinate--CoA ligase [ADP-forming] subunit beta from Salinibacter ruber (strain DSM 13855 / M31).